Consider the following 174-residue polypeptide: Shikimate kinase (174 aa).

ATP is bound at residue 15–20 (GTGKST). Residue serine 19 participates in Mg(2+) binding. Residues aspartate 37, arginine 61, and glycine 82 each coordinate substrate. Residue arginine 120 participates in ATP binding. Arginine 138 contributes to the substrate binding site.

The protein belongs to the shikimate kinase family. Monomer. It depends on Mg(2+) as a cofactor.

It is found in the cytoplasm. It catalyses the reaction shikimate + ATP = 3-phosphoshikimate + ADP + H(+). It functions in the pathway metabolic intermediate biosynthesis; chorismate biosynthesis; chorismate from D-erythrose 4-phosphate and phosphoenolpyruvate: step 5/7. In terms of biological role, catalyzes the specific phosphorylation of the 3-hydroxyl group of shikimic acid using ATP as a cosubstrate. The chain is Shikimate kinase from Staphylococcus aureus (strain MRSA252).